A 717-amino-acid polypeptide reads, in one-letter code: Polyribonucleotide nucleotidyltransferase (717 aa).

The Mg(2+) site is built by Asp486 and Asp492. The region spanning 553–612 (PRMITVKINPEKIRDVIGKGGSTIQALTKETGCTIDIQEDGTITIASTSSEGMAEAKRRI) is the KH domain. The S1 motif domain maps to 622 to 690 (GKIYSGTVLK…EKGRMRLSIK (69 aa)). A disordered region spans residues 690 to 717 (KAAKAEEGDVPATAPQAPGAGDATSQQQ).

The protein belongs to the polyribonucleotide nucleotidyltransferase family. The cofactor is Mg(2+).

Its subcellular location is the cytoplasm. The enzyme catalyses RNA(n+1) + phosphate = RNA(n) + a ribonucleoside 5'-diphosphate. Functionally, involved in mRNA degradation. Catalyzes the phosphorolysis of single-stranded polyribonucleotides processively in the 3'- to 5'-direction. This Ralstonia nicotianae (strain ATCC BAA-1114 / GMI1000) (Ralstonia solanacearum) protein is Polyribonucleotide nucleotidyltransferase.